The primary structure comprises 163 residues: Nucleotide-binding protein syc0675_c (163 aa).

Belongs to the YajQ family.

In terms of biological role, nucleotide-binding protein. The polypeptide is Nucleotide-binding protein syc0675_c (Synechococcus sp. (strain ATCC 27144 / PCC 6301 / SAUG 1402/1) (Anacystis nidulans)).